A 208-amino-acid polypeptide reads, in one-letter code: Glycerol-3-phosphate acyltransferase (208 aa).

A run of 5 helical transmembrane segments spans residues 4–24, 56–76, 80–100, 117–137, and 139–159; these read LALSMIIFAYLLGSISSAVLI, VAVLLCDMLKGTIPVWGGYFL, PFMLGLVAIAACLGHMYPIFF, PIGLDLTAMVMATWLVVVVLF, and YSSLAALVTVLLAPLYTWLIK.

The protein belongs to the PlsY family. As to quaternary structure, probably interacts with PlsX.

It is found in the cell inner membrane. It catalyses the reaction an acyl phosphate + sn-glycerol 3-phosphate = a 1-acyl-sn-glycero-3-phosphate + phosphate. Its pathway is lipid metabolism; phospholipid metabolism. In terms of biological role, catalyzes the transfer of an acyl group from acyl-phosphate (acyl-PO(4)) to glycerol-3-phosphate (G3P) to form lysophosphatidic acid (LPA). This enzyme utilizes acyl-phosphate as fatty acyl donor, but not acyl-CoA or acyl-ACP. This is Glycerol-3-phosphate acyltransferase from Vibrio cholerae serotype O1 (strain ATCC 39541 / Classical Ogawa 395 / O395).